We begin with the raw amino-acid sequence, 467 residues long: Glutamate--tRNA ligase (467 aa).

The 'HIGH' region motif lies at 9 to 19 (PSPTGYLHIGG). Residues 237-241 (KLSKR) carry the 'KMSKS' region motif. K240 contacts ATP.

The protein belongs to the class-I aminoacyl-tRNA synthetase family. Glutamate--tRNA ligase type 1 subfamily. Monomer.

Its subcellular location is the cytoplasm. It catalyses the reaction tRNA(Glu) + L-glutamate + ATP = L-glutamyl-tRNA(Glu) + AMP + diphosphate. In terms of biological role, catalyzes the attachment of glutamate to tRNA(Glu) in a two-step reaction: glutamate is first activated by ATP to form Glu-AMP and then transferred to the acceptor end of tRNA(Glu). The protein is Glutamate--tRNA ligase of Xanthomonas campestris pv. campestris (strain 8004).